Reading from the N-terminus, the 277-residue chain is GATA transcription factor 15 (277 aa).

Residues 52-94 (AYDDHSTVTTSPSSPSSSSTGSVDCTLSLGTPSSRRAEPVAAA) are disordered. The segment covering 58 to 74 (TVTTSPSSPSSSSTGSV) has biased composition (low complexity). A GATA-type zinc finger spans residues 154–179 (CANCGTASTPLWRNGPRGPKSLCNAC).

The protein belongs to the type IV zinc-finger family. Class B subfamily.

Probable transcription factor that regulates organogenesis during transition from the vegetative to the reproductive phase. Regulates the expression of CYP78A11/PLA1, HD3A and MADS1 during reproductive development in rice. May act upstream of CYP78A11/PLA1 during panicle development. Acts independently of the photoperiodic and gibberellin signaling pathways. The chain is GATA transcription factor 15 from Oryza sativa subsp. indica (Rice).